A 239-amino-acid chain; its full sequence is Carboxy-S-adenosyl-L-methionine synthase (239 aa).

S-adenosyl-L-methionine contacts are provided by residues Tyr35, 64–66, 88–89, and Arg195; these read GCS and DN.

The protein belongs to the class I-like SAM-binding methyltransferase superfamily. Cx-SAM synthase family. In terms of assembly, homodimer.

It carries out the reaction prephenate + S-adenosyl-L-methionine = carboxy-S-adenosyl-L-methionine + 3-phenylpyruvate + H2O. Functionally, catalyzes the conversion of S-adenosyl-L-methionine (SAM) to carboxy-S-adenosyl-L-methionine (Cx-SAM). The sequence is that of Carboxy-S-adenosyl-L-methionine synthase from Helicobacter pylori (strain G27).